Consider the following 229-residue polypeptide: ATP-dependent dethiobiotin synthetase BioD (229 aa).

Residue 12 to 17 coordinates ATP; sequence GVGKTV. Thr-16 is a binding site for Mg(2+). The active site involves Lys-37. Thr-41 contacts substrate. Residues Asp-53, 112–115, and 201–203 each bind ATP; these read EGAG and PAG. Residues Asp-53 and Glu-112 each coordinate Mg(2+).

It belongs to the dethiobiotin synthetase family. In terms of assembly, homodimer. Requires Mg(2+) as cofactor.

Its subcellular location is the cytoplasm. It carries out the reaction (7R,8S)-7,8-diammoniononanoate + CO2 + ATP = (4R,5S)-dethiobiotin + ADP + phosphate + 3 H(+). It functions in the pathway cofactor biosynthesis; biotin biosynthesis; biotin from 7,8-diaminononanoate: step 1/2. Functionally, catalyzes a mechanistically unusual reaction, the ATP-dependent insertion of CO2 between the N7 and N8 nitrogen atoms of 7,8-diaminopelargonic acid (DAPA, also called 7,8-diammoniononanoate) to form a ureido ring. The sequence is that of ATP-dependent dethiobiotin synthetase BioD from Mycobacterium sp. (strain KMS).